A 214-amino-acid chain; its full sequence is uncharacterized protein (214 aa).

Residue Tyr-129 is the Proton acceptor of the active site.

Belongs to the NAD(P)-dependent epimerase/dehydratase family.

This is an uncharacterized protein from Bacillus subtilis (strain 168).